The primary structure comprises 392 residues: D-amino-acid oxidase 2 (392 aa).

FAD-binding residues include serine 10, isoleucine 13, arginine 33, aspartate 34, alanine 45, serine 46, glycine 50, and asparagine 52. Anthranilate contacts are provided by phenylalanine 56, tyrosine 245, tyrosine 262, and arginine 311. (R)-lactate is bound by residues tyrosine 245, tyrosine 262, and arginine 311. FAD-binding residues include arginine 311, glycine 361, serine 362, glycine 364, and glutamine 366. An anthranilate-binding site is contributed by serine 362. Serine 362 contacts (R)-lactate. Residues 390–392 carry the Microbody targeting signal motif; sequence AKL.

This sequence belongs to the DAMOX/DASOX family. Requires FAD as cofactor.

Its subcellular location is the peroxisome matrix. It carries out the reaction a D-alpha-amino acid + O2 + H2O = a 2-oxocarboxylate + H2O2 + NH4(+). The enzyme catalyses D-methionine + O2 + H2O = 4-methylsulfanyl-2-oxobutanoate + H2O2 + NH4(+). It catalyses the reaction D-serine + O2 + H2O = 3-hydroxypyruvate + H2O2 + NH4(+). The catalysed reaction is D-histidine + O2 + H2O = 3-(imidazol-5-yl)pyruvate + H2O2 + NH4(+). It carries out the reaction D-proline + O2 = 1-pyrroline-2-carboxylate + H2O2. The enzyme catalyses D-alanine + O2 + H2O = pyruvate + H2O2 + NH4(+). It catalyses the reaction D-leucine + O2 + H2O = 4-methyl-2-oxopentanoate + H2O2 + NH4(+). The catalysed reaction is D-valine + O2 + H2O = 3-methyl-2-oxobutanoate + H2O2 + NH4(+). In terms of biological role, catalyzes the oxidative deamination of D-amino acids with broad substrate specificity. Enables the organism to utilize D-amino acids as a source of nutrients. Enables the organism to utilize D-alanine, D-cysteine, D-histidine, D-leucine, D-methionine, D-phenylalanine, D-proline, D-serine, D-threonine, D-aspartate and D-valine as a nitrogen source and may also contribute to utlization of D-tryptophan, D-tyrosine and D-asparagine as a nitrogen source. Protects the organism from the toxicity of D-amino acids, including from D-alanine. May play a role in its interaction with the host. This Cryptococcus deuterogattii (strain R265) (Cryptococcus gattii VGII (strain R265)) protein is D-amino-acid oxidase 2.